The primary structure comprises 132 residues: MKRLLSWLTGALVMAGLLSSLVLPSAVYAEEDLLGKYSGSEIRNVVDDKIAEREGKVDLNNSSVRRFQQFPGMYPTMAGKIVLGGPYNNVDDVLELDLSERQKELFAKYRDNFTVTPPSIALNEGDDRINDG.

A signal peptide spans 1–29 (MKRLLSWLTGALVMAGLLSSLVLPSAVYA).

It belongs to the PsbU family. In terms of assembly, PSII is composed of 1 copy each of membrane proteins PsbA, PsbB, PsbC, PsbD, PsbE, PsbF, PsbH, PsbI, PsbJ, PsbK, PsbL, PsbM, PsbT, PsbX, PsbY, PsbZ, Psb30/Ycf12, peripheral proteins PsbO, CyanoQ (PsbQ), PsbU, PsbV and a large number of cofactors. It forms dimeric complexes.

The protein resides in the cellular thylakoid membrane. Its function is as follows. One of the extrinsic, lumenal subunits of photosystem II (PSII). PSII is a light-driven water plastoquinone oxidoreductase, using light energy to abstract electrons from H(2)O, generating a proton gradient subsequently used for ATP formation. The extrinsic proteins stabilize the structure of photosystem II oxygen-evolving complex (OEC), the ion environment of oxygen evolution and protect the OEC against heat-induced inactivation. This is Photosystem II extrinsic protein U from Synechococcus sp. (strain CC9902).